The chain runs to 632 residues: 1-deoxy-D-xylulose-5-phosphate synthase (632 aa).

Thiamine diphosphate is bound by residues His-77 and 118 to 120; that span reads GHA. Mg(2+) is bound at residue Asp-149. Residues 150–151, Asn-178, Phe-287, and Glu-372 each bind thiamine diphosphate; that span reads GS. Asn-178 is a binding site for Mg(2+).

The protein belongs to the transketolase family. DXPS subfamily. As to quaternary structure, homodimer. Requires Mg(2+) as cofactor. The cofactor is thiamine diphosphate.

It carries out the reaction D-glyceraldehyde 3-phosphate + pyruvate + H(+) = 1-deoxy-D-xylulose 5-phosphate + CO2. The protein operates within metabolic intermediate biosynthesis; 1-deoxy-D-xylulose 5-phosphate biosynthesis; 1-deoxy-D-xylulose 5-phosphate from D-glyceraldehyde 3-phosphate and pyruvate: step 1/1. Functionally, catalyzes the acyloin condensation reaction between C atoms 2 and 3 of pyruvate and glyceraldehyde 3-phosphate to yield 1-deoxy-D-xylulose-5-phosphate (DXP). In Chlorobium luteolum (strain DSM 273 / BCRC 81028 / 2530) (Pelodictyon luteolum), this protein is 1-deoxy-D-xylulose-5-phosphate synthase.